A 227-amino-acid chain; its full sequence is MPTIIDKLSDALHLHSHQSTFDSKVTVIFVLGGPGAGKGTQCARLVEDFSFSHLSAGDLLRAEQHREGSEYGQLIQTCIKEGSIVPMEVTVKLLENAMTATLAERRSGEGWTDGQGRFLIDGFPRKMDQAEKFEHDVGKATAVLFFSTTQEVMLDRLLERGKTSGREDDNVESIKKRFNTYKEQTMPVIEHYEKLGKVIEIDSSVSIEEVHQKTRSAVAKLLSGSTA.

35 to 40 contributes to the ATP binding site; it reads GAGKGT. The NMP stretch occupies residues 55–85; that stretch reads SAGDLLRAEQHREGSEYGQLIQTCIKEGSIV. Residues Arg-61, 83–85, 122–125, and Gln-129 each bind a ribonucleoside 5'-phosphate; these read SIV and GFPR. Positions 159-169 are LID; that stretch reads ERGKTSGREDD. Arg-160 provides a ligand contact to ATP. Positions 166 and 177 each coordinate a ribonucleoside 5'-phosphate. Val-205 is an ATP binding site.

It belongs to the adenylate kinase family. UMP-CMP kinase subfamily. In terms of assembly, monomer. The cofactor is Mg(2+).

The protein localises to the cytoplasm. The protein resides in the nucleus. The enzyme catalyses UMP + ATP = UDP + ADP. Functionally, catalyzes the phosphorylation of pyrimidine nucleoside monophosphates at the expense of ATP. Plays an important role in de novo pyrimidine nucleotide biosynthesis. Has preference for UMP and CMP as phosphate acceptors, but can also use AMP and dCMP to a lesser extent. May play a role during the formation of basidiospores in the gill tissue. The polypeptide is UMP-CMP kinase (uck1) (Lentinula edodes (Shiitake mushroom)).